The primary structure comprises 471 residues: Tryptophanase (471 aa).

An N6-acetyllysine mark is found at Lys5, Lys115, and Lys156. Lys270 is subject to N6-(pyridoxal phosphate)lysine. Position 450 is an N6-acetyllysine (Lys450).

The protein belongs to the beta-eliminating lyase family. As to quaternary structure, homotetramer. Pyridoxal 5'-phosphate is required as a cofactor.

The enzyme catalyses L-tryptophan + H2O = indole + pyruvate + NH4(+). The protein operates within amino-acid degradation; L-tryptophan degradation via pyruvate pathway; indole and pyruvate from L-tryptophan: step 1/1. This is Tryptophanase from Escherichia fergusonii (strain ATCC 35469 / DSM 13698 / CCUG 18766 / IAM 14443 / JCM 21226 / LMG 7866 / NBRC 102419 / NCTC 12128 / CDC 0568-73).